Consider the following 140-residue polypeptide: Translation initiation factor 2 subunit beta (140 aa).

This sequence belongs to the eIF-2-beta/eIF-5 family. As to quaternary structure, heterotrimer composed of an alpha, a beta and a gamma chain.

Functionally, eIF-2 functions in the early steps of protein synthesis by forming a ternary complex with GTP and initiator tRNA. The sequence is that of Translation initiation factor 2 subunit beta from Metallosphaera sedula (strain ATCC 51363 / DSM 5348 / JCM 9185 / NBRC 15509 / TH2).